A 266-amino-acid polypeptide reads, in one-letter code: MDTLQVIILALIQGLTEFLPISSSAHLILPAQLFGWEDQGLSFDVAVHIGSLAAVVIYFRNEILAMLKAWLASIFRGQQSDDSKLAWWIILATIPAIGVGFTAKDMVETHLRGPGVIAITTVIFGLLLWFADRIAKDEMTEYQTGWRKALLIGVAQALALIPGTSRSGITITAALMLGLKREAAARFSFLMSIPVILGAALLMTKDIITENHVVDWHALALGSILSFIAAYACIYFFLKIISRMGMTPFVIYRIALGVFLCGFIYL.

A run of 8 helical transmembrane segments spans residues 1 to 21, 39 to 59, 83 to 103, 111 to 131, 149 to 169, 183 to 203, 218 to 238, and 246 to 266; these read MDTLQVIILALIQGLTEFLPI, QGLSFDVAVHIGSLAAVVIYF, SKLAWWIILATIPAIGVGFTA, LRGPGVIAITTVIFGLLLWFA, ALLIGVAQALALIPGTSRSGI, AAARFSFLMSIPVILGAALLM, ALALGSILSFIAAYACIYFFL, and MTPFVIYRIALGVFLCGFIYL.

Belongs to the UppP family.

It localises to the cell inner membrane. It carries out the reaction di-trans,octa-cis-undecaprenyl diphosphate + H2O = di-trans,octa-cis-undecaprenyl phosphate + phosphate + H(+). Its function is as follows. Catalyzes the dephosphorylation of undecaprenyl diphosphate (UPP). Confers resistance to bacitracin. The sequence is that of Undecaprenyl-diphosphatase from Shewanella amazonensis (strain ATCC BAA-1098 / SB2B).